The primary structure comprises 409 residues: Arginine deiminase (409 aa).

Cysteine 399 acts as the Amidino-cysteine intermediate in catalysis.

The protein belongs to the arginine deiminase family.

It is found in the cytoplasm. It catalyses the reaction L-arginine + H2O = L-citrulline + NH4(+). It participates in amino-acid degradation; L-arginine degradation via ADI pathway; carbamoyl phosphate from L-arginine: step 1/2. The polypeptide is Arginine deiminase (Streptococcus pneumoniae serotype 19F (strain G54)).